Reading from the N-terminus, the 20-residue chain is Unknown protein NF028 from 2D-PAGE (20 aa).

This Naegleria fowleri (Brain eating amoeba) protein is Unknown protein NF028 from 2D-PAGE.